A 136-amino-acid polypeptide reads, in one-letter code: Small ribosomal subunit protein eS8 (136 aa).

The interval 1–23 (MGVYHGNDLKKPTGGKKRPHQKV) is disordered. Residues 13–23 (TGGKKRPHQKV) are compositionally biased toward basic residues.

The protein belongs to the eukaryotic ribosomal protein eS8 family. In terms of assembly, part of the 30S ribosomal subunit.

This chain is Small ribosomal subunit protein eS8, found in Hyperthermus butylicus (strain DSM 5456 / JCM 9403 / PLM1-5).